Consider the following 283-residue polypeptide: Flagellar filament 35 kDa core protein (283 aa).

Belongs to the bacterial flagellin family. In terms of assembly, the flagellum consists of two outer layers around a core that contains several antigenically related polypeptides.

It localises to the periplasmic flagellum. The protein resides in the periplasm. Functionally, component of the core of the flagella. In Leptospira interrogans serogroup Icterohaemorrhagiae serovar Lai (strain 56601), this protein is Flagellar filament 35 kDa core protein (flaB).